The sequence spans 58 residues: UPF0391 membrane protein Maqu_2901 (58 aa).

The next 2 membrane-spanning stretches (helical) occupy residues 4–24 and 28–48; these read WAIV…GGIA and AGFA…SLVV.

The protein belongs to the UPF0391 family.

The protein resides in the cell membrane. The chain is UPF0391 membrane protein Maqu_2901 from Marinobacter nauticus (strain ATCC 700491 / DSM 11845 / VT8) (Marinobacter aquaeolei).